Consider the following 383-residue polypeptide: Succinyl-diaminopimelate desuccinylase (383 aa).

Histidine 74 serves as a coordination point for Zn(2+). The active site involves aspartate 76. Aspartate 107 provides a ligand contact to Zn(2+). The active-site Proton acceptor is glutamate 141. Residues glutamate 142, glutamate 170, and histidine 356 each coordinate Zn(2+).

This sequence belongs to the peptidase M20A family. DapE subfamily. In terms of assembly, homodimer. The cofactor is Zn(2+). Co(2+) serves as cofactor.

The catalysed reaction is N-succinyl-(2S,6S)-2,6-diaminopimelate + H2O = (2S,6S)-2,6-diaminopimelate + succinate. It participates in amino-acid biosynthesis; L-lysine biosynthesis via DAP pathway; LL-2,6-diaminopimelate from (S)-tetrahydrodipicolinate (succinylase route): step 3/3. In terms of biological role, catalyzes the hydrolysis of N-succinyl-L,L-diaminopimelic acid (SDAP), forming succinate and LL-2,6-diaminopimelate (DAP), an intermediate involved in the bacterial biosynthesis of lysine and meso-diaminopimelic acid, an essential component of bacterial cell walls. The sequence is that of Succinyl-diaminopimelate desuccinylase from Polynucleobacter necessarius subsp. necessarius (strain STIR1).